The following is a 217-amino-acid chain: MOB kinase activator 3A (217 aa).

4 residues coordinate Zn(2+): cysteine 83, cysteine 88, histidine 165, and histidine 170.

It belongs to the MOB1/phocein family.

In terms of biological role, may regulate the activity of kinases. This Mus musculus (Mouse) protein is MOB kinase activator 3A (Mob3a).